Reading from the N-terminus, the 1379-residue chain is DNA-directed RNA polymerase subunit beta'' (1379 aa).

Zn(2+) contacts are provided by Cys220, Cys293, Cys300, and Cys303.

It belongs to the RNA polymerase beta' chain family. RpoC2 subfamily. As to quaternary structure, in plastids the minimal PEP RNA polymerase catalytic core is composed of four subunits: alpha, beta, beta', and beta''. When a (nuclear-encoded) sigma factor is associated with the core the holoenzyme is formed, which can initiate transcription. Requires Zn(2+) as cofactor.

The protein resides in the plastid. Its subcellular location is the chloroplast. The catalysed reaction is RNA(n) + a ribonucleoside 5'-triphosphate = RNA(n+1) + diphosphate. In terms of biological role, DNA-dependent RNA polymerase catalyzes the transcription of DNA into RNA using the four ribonucleoside triphosphates as substrates. This Capsella bursa-pastoris (Shepherd's purse) protein is DNA-directed RNA polymerase subunit beta''.